The chain runs to 187 residues: UPF0301 protein plu1183 (187 aa).

It belongs to the UPF0301 (AlgH) family.

This is UPF0301 protein plu1183 from Photorhabdus laumondii subsp. laumondii (strain DSM 15139 / CIP 105565 / TT01) (Photorhabdus luminescens subsp. laumondii).